A 536-amino-acid chain; its full sequence is Testis-specific protein 10-interacting protein (536 aa).

3 disordered regions span residues 1 to 94, 185 to 234, and 246 to 305; these read MLNT…LFSS, SQGL…PGQG, and MEEE…FKGP. Positions 48-64 are enriched in low complexity; it reads SGDSLQSQSCQQQRSYS. A compositionally biased stretch (basic residues) spans 71-83; that stretch reads KERKPRRRNKKGR. A coiled-coil region spans residues 375–451; the sequence is QAWEQQQLKE…LQGIQHRVQA (77 aa). A disordered region spans residues 491–536; that stretch reads GNAEGIPRKHRSYRSFGVEMESSPQSPPKTEPTSSQPGRHPSPTLD.

This chain is Testis-specific protein 10-interacting protein (Tsga10ip), found in Rattus norvegicus (Rat).